The chain runs to 354 residues: Peptide chain release factor 1 (354 aa).

Gln-230 carries the post-translational modification N5-methylglutamine.

It belongs to the prokaryotic/mitochondrial release factor family. Post-translationally, methylated by PrmC. Methylation increases the termination efficiency of RF1.

Its subcellular location is the cytoplasm. Its function is as follows. Peptide chain release factor 1 directs the termination of translation in response to the peptide chain termination codons UAG and UAA. The protein is Peptide chain release factor 1 of Leptospira interrogans serogroup Icterohaemorrhagiae serovar copenhageni (strain Fiocruz L1-130).